The primary structure comprises 117 residues: Histone H1-like protein HC1 (117 aa).

A disordered region spans residues 57–117 (EKSGLMTRKP…KSSKSRYLRK (61 aa)). Residues 66–81 (PATKAKKAAATKKAAP) show a composition bias toward basic residues. Positions 82 to 94 (KPKIQAKAAPKAK) are enriched in low complexity. Residues 95-117 (ATTKKTPAKAKAKKSSKSRYLRK) are compositionally biased toward basic residues.

Belongs to the histone H1/H5 family. HCT subfamily.

Might have a role analogous to that of eukaryotic histone proteins. This Chlamydia psittaci (Chlamydophila psittaci) protein is Histone H1-like protein HC1 (hctA).